Reading from the N-terminus, the 753-residue chain is 5-methyltetrahydropteroyltriglutamate--homocysteine methyltransferase (753 aa).

5-methyltetrahydropteroyltri-L-glutamate is bound by residues 17–20 and Lys117; that span reads RELK. Residues 431–433 and Glu484 each bind L-homocysteine; that span reads IGS. Residues 431–433 and Glu484 contribute to the L-methionine site; that span reads IGS. 5-methyltetrahydropteroyltri-L-glutamate-binding positions include 515–516 and Trp561; that span reads RC. Position 599 (Asp599) interacts with L-homocysteine. Asp599 serves as a coordination point for L-methionine. Glu605 contributes to the 5-methyltetrahydropteroyltri-L-glutamate binding site. Residues His641, Cys643, and Glu665 each coordinate Zn(2+). Catalysis depends on His694, which acts as the Proton donor. Cys726 contacts Zn(2+).

Belongs to the vitamin-B12 independent methionine synthase family. Requires Zn(2+) as cofactor.

The catalysed reaction is 5-methyltetrahydropteroyltri-L-glutamate + L-homocysteine = tetrahydropteroyltri-L-glutamate + L-methionine. Its pathway is amino-acid biosynthesis; L-methionine biosynthesis via de novo pathway; L-methionine from L-homocysteine (MetE route): step 1/1. In terms of biological role, catalyzes the transfer of a methyl group from 5-methyltetrahydrofolate to homocysteine resulting in methionine formation. In Shigella flexneri serotype 5b (strain 8401), this protein is 5-methyltetrahydropteroyltriglutamate--homocysteine methyltransferase.